A 79-amino-acid polypeptide reads, in one-letter code: Virulence protein MsgA (79 aa).

Belongs to the DinI family.

Affects survival in macrophages. The polypeptide is Virulence protein MsgA (msgA) (Salmonella typhi).